A 296-amino-acid polypeptide reads, in one-letter code: Nucleotide-binding protein SMU_1306c (296 aa).

Residue 13 to 20 participates in ATP binding; that stretch reads GMSGAGKT. Position 63–66 (63–66) interacts with GTP; the sequence is DMRS.

This sequence belongs to the RapZ-like family.

In terms of biological role, displays ATPase and GTPase activities. This chain is Nucleotide-binding protein SMU_1306c, found in Streptococcus mutans serotype c (strain ATCC 700610 / UA159).